The following is a 403-amino-acid chain: Aloesone synthase (403 aa).

Residue cysteine 174 is part of the active site. CoA-binding positions include serine 281 and 318-321; that span reads GGRA.

The protein belongs to the thiolase-like superfamily. Chalcone/stilbene synthases family. In terms of assembly, homodimer.

Its pathway is secondary metabolite biosynthesis; flavonoid biosynthesis. Its function is as follows. Catalyzes the iterative condensations of 6, 7 or 8 molecules of malonyl-CoA to produce various aromatic polyketides. Produces the heptaketide aloesone, the aglycone of aloesin, from 7 molecules of malonyl-CoA as a major product. Also able to produce a hexaketide pyrone, a heptaketide 6-(2-acetyl-3,5-dihydroxybenzyl)-4-hydroxy-2-pyrone, a novel heptaketide 6-(2-(2,4-dihydroxy-6-methylphenyl)-2-oxoethyl)-4-hydroxy-2-pyrone and octaketides SEK4/SEK4b. The protein is Aloesone synthase (PKS3) of Aloe arborescens (Kidachi aloe).